A 462-amino-acid chain; its full sequence is GTPase Der (462 aa).

EngA-type G domains lie at 9-171 (KTIA…GLTK) and 201-372 (IQVG…ECFS). GTP-binding positions include 15–22 (GQPNVGKS), 62–66 (DTGGM), 123–126 (NKID), 207–214 (GRVNVGKS), 254–258 (DTAGI), and 318–321 (NKWD). The 85-residue stretch at 373 to 457 (KRIPTSLLNS…PLIINAKDKK (85 aa)) folds into the KH-like domain.

Belongs to the TRAFAC class TrmE-Era-EngA-EngB-Septin-like GTPase superfamily. EngA (Der) GTPase family. In terms of assembly, associates with the 50S ribosomal subunit.

GTPase that plays an essential role in the late steps of ribosome biogenesis. The chain is GTPase Der from Helicobacter acinonychis (strain Sheeba).